The sequence spans 163 residues: Nucleotide-binding protein BCG9842_B4128 (163 aa).

This sequence belongs to the YajQ family.

Nucleotide-binding protein. The chain is Nucleotide-binding protein BCG9842_B4128 from Bacillus cereus (strain G9842).